Reading from the N-terminus, the 1449-residue chain is uncharacterized protein (1449 aa).

Positions 1 to 13 (MELRSDASHKENV) are enriched in basic and acidic residues. Disordered stretches follow at residues 1–32 (MELRSDASHKENVSPKPAALPKPEQRRFRRSL), 123–201 (SNLS…LRSW), 258–298 (APQE…RRRR), 315–437 (LSDS…NKAQ), 523–551 (KQVQPHMQAGPGSPPSRRAQGKGLSLGRS), 1257–1278 (DQGPRAHSSPEPRACKAQSKAH), and 1399–1449 (RLAA…QLQL). Positions 123–133 (SNLSINETSSP) are enriched in polar residues. Composition is skewed to polar residues over residues 315 to 333 (LSDSWAQSKLMSPETTLGT) and 384 to 394 (PCSSAFSNTAW). The span at 400–419 (QKGEEGAPRERVHREEERTA) shows a compositional bias: basic and acidic residues. Over residues 426–437 (VPASSASKNKAQ) the composition is skewed to polar residues. The segment covering 1258-1270 (QGPRAHSSPEPRA) has biased composition (basic and acidic residues).

This is an uncharacterized protein from Homo sapiens (Human).